The following is a 221-amino-acid chain: Sentrin-specific protease 8 (221 aa).

At Met1 the chain carries N-acetylmethionine. Positions 11–174 are protease; that stretch reads SLLRQSDVSL…MYVICNTEAL (164 aa). Catalysis depends on residues His102 and Asp119. The active-site Nucleophile is the Cys163.

It belongs to the peptidase C48 family.

Functionally, protease that catalyzes two essential functions in the NEDD8 pathway: processing of full-length NEDD8 to its mature form and deconjugation of NEDD8 from targeted proteins such as cullins or p53. The polypeptide is Sentrin-specific protease 8 (Senp8) (Mus musculus (Mouse)).